Reading from the N-terminus, the 444-residue chain is Divalent metal cation transporter MntH (444 aa).

The next 11 helical transmembrane spans lie at 31 to 51 (GGHW…VSVG), 68 to 88 (FGYL…VLQG), 115 to 135 (LALW…EVIG), 146 to 166 (IPLT…LLLM), 175 to 195 (AFVM…IALA), 212 to 232 (VVTN…TVMP), 267 to 287 (VALM…AAVF), 303 to 323 (ALLA…VALL), 356 to 376 (LLTR…YGEA), 381 to 401 (LLVL…IPLV), and 413 to 433 (LVAP…IVGL).

It belongs to the NRAMP family.

The protein localises to the cell inner membrane. Functionally, h(+)-stimulated, divalent metal cation uptake system. This chain is Divalent metal cation transporter MntH, found in Xanthomonas campestris pv. campestris (strain ATCC 33913 / DSM 3586 / NCPPB 528 / LMG 568 / P 25).